The chain runs to 387 residues: EARP-interacting protein homolog (387 aa).

WD repeat units lie at residues 132–172, 182–222, 226–266, 270–310, and 345–385; these read TAHG…SKAV, KGQL…QIYC, AHGQ…DPVK, EHSH…SEPF, and EHED…KYHI.

The protein belongs to the WD repeat EIPR1 family.

The chain is EARP-interacting protein homolog from Gekko japonicus (Schlegel's Japanese gecko).